Reading from the N-terminus, the 365-residue chain is 3-isopropylmalate dehydrogenase (365 aa).

78–89 contributes to the NAD(+) binding site; that stretch reads GPKWGTGKVRPE. Residues Arg-96, Arg-106, Arg-135, and Asp-224 each contribute to the substrate site. Residues Asp-224, Asp-249, and Asp-253 each contribute to the Mg(2+) site. 289–301 serves as a coordination point for NAD(+); that stretch reads GSAPDISGKGIVN.

The protein belongs to the isocitrate and isopropylmalate dehydrogenases family. In terms of assembly, homodimer. Mg(2+) is required as a cofactor. It depends on Mn(2+) as a cofactor.

It is found in the cytoplasm. The enzyme catalyses (2R,3S)-3-isopropylmalate + NAD(+) = 4-methyl-2-oxopentanoate + CO2 + NADH. Its pathway is amino-acid biosynthesis; L-leucine biosynthesis; L-leucine from 3-methyl-2-oxobutanoate: step 3/4. Functionally, catalyzes the oxidation of 3-carboxy-2-hydroxy-4-methylpentanoate (3-isopropylmalate) to 3-carboxy-4-methyl-2-oxopentanoate. The product decarboxylates to 4-methyl-2 oxopentanoate. In Zymoseptoria tritici (Speckled leaf blotch fungus), this protein is 3-isopropylmalate dehydrogenase (LEUC).